The primary structure comprises 158 residues: Small ribosomal subunit protein uS13 (158 aa).

The protein belongs to the universal ribosomal protein uS13 family. As to quaternary structure, part of the 30S ribosomal subunit. Forms a loose heterodimer with protein S19. Forms two bridges to the 50S subunit in the 70S ribosome.

Located at the top of the head of the 30S subunit, it contacts several helices of the 16S rRNA. In the 70S ribosome it contacts the 23S rRNA (bridge B1a) and protein L5 of the 50S subunit (bridge B1b), connecting the 2 subunits; these bridges are implicated in subunit movement. The polypeptide is Small ribosomal subunit protein uS13 (Picrophilus torridus (strain ATCC 700027 / DSM 9790 / JCM 10055 / NBRC 100828 / KAW 2/3)).